The primary structure comprises 63 residues: Large ribosomal subunit protein uL29 (63 aa).

This sequence belongs to the universal ribosomal protein uL29 family.

The chain is Large ribosomal subunit protein uL29 from Azotobacter vinelandii (strain DJ / ATCC BAA-1303).